The primary structure comprises 97 residues: MGIPNLTKGDAMRAAKHYRQLLSIDFNIEALAFVPGPDGTRGRRIHVLGREVRDRPGLVEYLSPAFGSRVALDGYCKANFDAVLHLAYPDHQQWGHA.

The sequence is that of Protein ParC (parC) from Escherichia coli.